A 797-amino-acid polypeptide reads, in one-letter code: Speckle targeted PIP5K1A-regulated poly(A) polymerase (797 aa).

The Matrin-type zinc finger occupies 14–44; it reads FHCNLCHVNIPNRPSLEDHVKGKKHLHLLRL. Residues 54 to 126 form the RRM domain; sequence NSVFVSGFKA…LKLRVKPREK (73 aa). Serine 205 serves as a coordination point for ATP. Positions 216 and 218 each coordinate Mg(2+). The UTP site is built by aspartate 216, aspartate 218, asparagine 319, arginine 341, tyrosine 363, and histidine 495. Residue asparagine 319 coordinates ATP. One can recognise a PAP-associated domain in the interval 421 to 495; that stretch reads DLCTLLFGFF…NVLDPFELNH (75 aa). The KA1; binds the bulging loops of U6 snRNA but is dispensable for terminal uridylyltransferase activity stretch occupies residues 544 to 787; it reads QSEAAASSQP…FLPKMAETIM (244 aa). Positions 611-659 are disordered; it reads EETQSLDKTDKSGSEMEVNNNRSLEDTNIQVKGEAGKKRPLSVEEGPST. Over residues 615–624 the composition is skewed to basic and acidic residues; the sequence is SLDKTDKSGS. Residues 627-640 show a composition bias toward polar residues; sequence EVNNNRSLEDTNIQ.

The protein belongs to the DNA polymerase type-B-like family. Associates with the cleavage and polyadenylation specificity factor (CPSF) complex. Requires Mg(2+) as cofactor. Mn(2+) serves as cofactor.

It localises to the nucleus. The protein resides in the nucleolus. Its subcellular location is the nucleus speckle. It catalyses the reaction RNA(n) + UTP = RNA(n)-3'-uridine ribonucleotide + diphosphate. The enzyme catalyses RNA(n) + ATP = RNA(n)-3'-adenine ribonucleotide + diphosphate. In terms of biological role, poly(A) polymerase that creates the 3'-poly(A) tail of specific pre-mRNAs. In addition to polyadenylation, it is also required for the 3'-end cleavage of pre-mRNAs: binds to the 3'UTR of targeted pre-mRNAs and promotes the recruitment and assembly of the CPSF complex on the 3'UTR of pre-mRNAs. In addition to adenylyltransferase activity, also has uridylyltransferase activity. However, the ATP ratio is higher than UTP in cells, suggesting that it functions primarily as a poly(A) polymerase. The protein is Speckle targeted PIP5K1A-regulated poly(A) polymerase (tut1) of Danio rerio (Zebrafish).